The primary structure comprises 853 residues: Transcription factor macR (853 aa).

Positions 18–45 form a DNA-binding region, zn(2)-C6 fungal-type; sequence CIVCRRRKVRCGREQPECANCVRMKENC. Disordered stretches follow at residues 54–122, 138–166, 734–775, and 833–853; these read ESTG…PYPT, ANAPQINGSSTTTRDPSPAPSTSLFPTPS, ASDL…AGNK, and LGSQSTASGRRGLPDGLDFPG. Composition is skewed to polar residues over residues 104–116, 141–163, and 738–752; these read PQVSANASPSPQR, PQINGSSTTTRDPSPAPSTSLFP, and RATSDQPSSDVSSTT.

It is found in the nucleus. Its function is as follows. Transcription factor that regulates the expression of the gene cluster that mediates the biosynthesis of macrophorins, isoprenoid epoxycyclohexenones containing cyclized drimane moieties. This chain is Transcription factor macR, found in Penicillium terrestre.